Here is a 335-residue protein sequence, read N- to C-terminus: PA-phosphatase related-family protein DDB_G0275547 (335 aa).

Helical transmembrane passes span 43 to 63, 93 to 113, 124 to 144, 202 to 222, 226 to 246, and 254 to 274; these read VMYL…GILF, VLIP…SLIV, ILGL…FKCF, SITA…FKIF, GHIF…LIGI, and HTFL…LSCY.

It belongs to the PA-phosphatase related phosphoesterase family.

The protein resides in the membrane. The polypeptide is PA-phosphatase related-family protein DDB_G0275547 (Dictyostelium discoideum (Social amoeba)).